A 314-amino-acid polypeptide reads, in one-letter code: Olfactory receptor 5G3 (314 aa).

Topologically, residues 1-24 (MEDKNQTVVTEFLLLGLTDHPYQK) are extracellular. An N-linked (GlcNAc...) asparagine glycan is attached at asparagine 5. The helical transmembrane segment at 25–45 (IVLFFMFLFVYLITLGGNLGM) threads the bilayer. Topologically, residues 46-97 (ITLIWIDPRLHTPMYFFLRHLSFVDICSSSSVVPKMLCNIFAEKKDITFLGC) are cytoplasmic. A disulfide bridge links cysteine 97 with cysteine 179. The chain crosses the membrane as a helical span at residues 98 to 118 (AAQMWFFGLFEAAECFLLAAM). Residues 119 to 143 (AYDRYVAICKPLLYTLIMSQQVCMQ) lie on the Extracellular side of the membrane. The helical transmembrane segment at 144–164 (LVVGPYAMALISTMTHTIFTF) threads the bilayer. The Cytoplasmic portion of the chain corresponds to 165 to 167 (CLP). The helical transmembrane segment at 168-188 (FCGSNIINHFFCDIFPLLSLA) threads the bilayer. Residues 189–196 (CADTWVNK) lie on the Extracellular side of the membrane. Residues 197 to 217 (FVLFVLAGAIGVLSGLIIMVS) traverse the membrane as a helical segment. Residues 218-237 (YICILMTILKIQTADGKQKA) lie on the Cytoplasmic side of the membrane. The chain crosses the membrane as a helical span at residues 238-258 (FFTCFSHLAAVSILYGTLFLI). Residues 259 to 268 (YVRPSSSSSL) are Extracellular-facing. Residues 269 to 289 (GIYKVISLFYTVVIPMVNPLI) form a helical membrane-spanning segment. The Cytoplasmic segment spans residues 290 to 314 (YSLRNKEVKDAFRRKIERKKFIIGR).

It belongs to the G-protein coupled receptor 1 family.

It is found in the cell membrane. Odorant receptor. The chain is Olfactory receptor 5G3 (OR5G3) from Homo sapiens (Human).